The sequence spans 375 residues: Platelet-derived growth factor receptor-like protein (375 aa).

Positions 1–21 (MKVWLLLGLLLVHEALEDVTG) are cleaved as a signal peptide. The disordered stretch occupies residues 22–64 (QHLPKNKRPKEPGENRIKPTNKKVKPKIPKMKDRDSANSAPKT). Positions 40 to 50 (PTNKKVKPKIP) are enriched in basic residues. An Ig-like C2-type 1 domain is found at 62–159 (PKTQSIMMQV…GYICRKDEAK (98 aa)). Cys96 and Cys143 are disulfide-bonded. N-linked (GlcNAc...) asparagine glycosylation is found at Asn132 and Asn219. The Ig-like C2-type 2 domain occupies 272-375 (PSTTILASSN…TTVATTVEFS (104 aa)). Cys293 and Cys357 are disulfide-bonded.

Forms a complex composed of PDGFRL, TNK2 and GRB2. In terms of tissue distribution, expressed in colon, lung and liver.

The protein resides in the secreted. The chain is Platelet-derived growth factor receptor-like protein (PDGFRL) from Homo sapiens (Human).